The chain runs to 575 residues: Jasmonoyl--L-amino acid synthetase JAR1 (575 aa).

The stretch at 10–30 forms a coiled coil; sequence MNRVIDEFDEMTRNAHQVQKQ. Serine 98 contacts ATP. Serine 101 contributes to the jasmonate binding site. ATP-binding positions include methionine 118, threonine 121, glycine 163, asparagine 168, and 331–336; that span reads GSSEGW. 166-170 contacts an L-alpha-amino acid; the sequence is TTNVY. 328-331 serves as a coordination point for jasmonate; that stretch reads HDYG. 530–534 is an an L-alpha-amino acid binding site; that stretch reads KIQEH. ATP is bound at residue lysine 557.

It belongs to the IAA-amido conjugating enzyme family. In terms of assembly, interacts with GSTU20/FIP1 under continuous far red (cFR) light; this binding increases its activity and determines the priority of substrate binding.

The protein resides in the cytoplasm. It catalyses the reaction a jasmonate + an L-alpha-amino acid + ATP = a jasmonyl-L-amino acid + AMP + diphosphate + H(+). It carries out the reaction (+)-7-isojasmonate + L-isoleucine + ATP = L-isoleucine-(+)-7-isojasmonate + AMP + diphosphate + H(+). With respect to regulation, activated by GSTU20/FIP1. Functionally, catalyzes the synthesis of jasmonates-amino acid conjugates by adenylation; can use Ile and, in vitro at least, Val, Leu and Phe as conjugating amino acids on jasmonic acid (JA) and 9,10-dihydro-JA substrates, and to a lower extent, on 3-oxo-2-(2Z-pentenyl)-cyclopentane-1-butyric acid (OPC-4) and 12-hydroxy-JA (12-OH-JA). Can synthesize adenosine 5-tetraphosphate in vitro. Required for the JA-mediated signaling pathway that regulates many developmental and defense mechanisms, including growth root inhibition, vegetative storage proteins (VSPs) accumulation, induced systemic resistance (ISR), response to wounding and herbivores, tolerance to ozone O(3) (probably having a role in lesion containment). Plays an important role in the accumulation of JA-Ile in response to wounding, both locally and systemically; promotes JA responding genes especially in distal part of wounded plants, via the JA-Ile-stimulated degradation of JAZ repressor proteins by the SCF(COI)E3 ubiquitin-protein ligase pathway. Involved in the apoptosis-like programmed cell death (PCD) induced by fungal toxin fumonisin B1-mediated (FB1). Required for volatile compounds (C6-aldehydes and allo-ocimene)-mediated defense activation. Involved in the non-pathogenic rhizobacterium-mediated ISR (defense priming) by P.fluorescens (strains CHAOr and WCS417r) and P.putida LSW17S against infection leaf pathogens such as P.syringae pv. tomato and H.parasitica. Required for the JA-dependent resistance to fungi such as P.irregulare, U.vignae and U.appendiculatus. Necessary to induce systemic resistance against R.solanaceraum and P.syringae pv. tomato with P.oligandrum (a non-pathogenic biocontrol agent) cell wall protein fraction (CWP). Mediates PGIP2 accumulation in response to B.cinerea infection and thus contributes to resistance against this pathogen. Modulates the UV-B alteration of leaves attractiveness to diamondback moths P.xylostella leading to insect oviposition. Involved in the regulation of far-red light influence on development, being an actor of the interplay between light and JA signaling. Seems necessary for the salicylic acid (SA)-mediated, NPR1-independent resistance pathway. May contribute to the chitin-elicited pathway. Contributes to the sensitivity toward F.graminearum. The chain is Jasmonoyl--L-amino acid synthetase JAR1 from Arabidopsis thaliana (Mouse-ear cress).